We begin with the raw amino-acid sequence, 82 residues long: Cytochrome b559 subunit alpha (82 aa).

A helical membrane pass occupies residues 22 to 36 (IIHAVTLPAIFIAGF). His24 contacts heme.

Belongs to the PsbE/PsbF family. As to quaternary structure, heterodimer of an alpha subunit and a beta subunit. PSII is composed of 1 copy each of membrane proteins PsbA, PsbB, PsbC, PsbD, PsbE, PsbF, PsbH, PsbI, PsbJ, PsbK, PsbL, PsbM, PsbT, PsbX, PsbY, Psb30/Ycf12, peripheral proteins PsbO, CyanoQ (PsbQ), PsbU, PsbV and a large number of cofactors. It forms dimeric complexes. The cofactor is heme b.

The protein localises to the cellular thylakoid membrane. Functionally, this b-type cytochrome is tightly associated with the reaction center of photosystem II (PSII). PSII is a light-driven water:plastoquinone oxidoreductase that uses light energy to abstract electrons from H(2)O, generating O(2) and a proton gradient subsequently used for ATP formation. It consists of a core antenna complex that captures photons, and an electron transfer chain that converts photonic excitation into a charge separation. This Prochlorococcus marinus (strain MIT 9515) protein is Cytochrome b559 subunit alpha.